We begin with the raw amino-acid sequence, 409 residues long: MAQNFTKLNPQFENIIFEHDDNQMILNFGPQHPSSHGQLRLILELEGEKIIKATPEIGYLHRGCEKLGENMTYNEYMPTTDRLDYTSSTSNNYAYAYAVETLLNLEIPRRAQVIRTILLELNRMISHIFFISVHALDVGAMSVFLYAFKTREYGLDLMEDYCGARLTHNAIRIGGVPLDLPPNWLEGLKKFLGEMRECKKLIQGLLDKNRIWRMRLENVGVVTPKMAQSWGMSGIMLRGTGIAYDIRKEEPYELYKELDFDVPVGNYGDSYDRYCLYMLEIDESIRIIEQLIPMYAKTDTPIMAQNPHYISAPKEDIMTQNYALMQHFVLVAQGMRPPVGEVYAPTESPKGELGFFIHSEGEPYPHRLKIRAPSFYHIGALSDILVGQYLADAVTVIGSTNAVFGEVDR.

It belongs to the complex I 49 kDa subunit family. NDH-1 is composed of 14 different subunits. Subunits NuoB, C, D, E, F, and G constitute the peripheral sector of the complex.

The protein resides in the cell inner membrane. The catalysed reaction is a quinone + NADH + 5 H(+)(in) = a quinol + NAD(+) + 4 H(+)(out). Functionally, NDH-1 shuttles electrons from NADH, via FMN and iron-sulfur (Fe-S) centers, to quinones in the respiratory chain. The immediate electron acceptor for the enzyme in this species is believed to be ubiquinone. Couples the redox reaction to proton translocation (for every two electrons transferred, four hydrogen ions are translocated across the cytoplasmic membrane), and thus conserves the redox energy in a proton gradient. This chain is NADH-quinone oxidoreductase subunit D, found in Helicobacter pylori (strain P12).